The primary structure comprises 229 residues: Large ribosomal subunit protein uL4 (229 aa).

The interval 62–103 (SRRQGTHQVKNRAAVSGSGKKPWKQKGTGRARHSSRRSPIWV) is disordered. The segment covering 82–97 (KPWKQKGTGRARHSSR) has biased composition (basic residues).

It belongs to the universal ribosomal protein uL4 family. In terms of assembly, part of the 50S ribosomal subunit.

One of the primary rRNA binding proteins, this protein initially binds near the 5'-end of the 23S rRNA. It is important during the early stages of 50S assembly. It makes multiple contacts with different domains of the 23S rRNA in the assembled 50S subunit and ribosome. Its function is as follows. Forms part of the polypeptide exit tunnel. This Mycoplasmopsis synoviae (strain 53) (Mycoplasma synoviae) protein is Large ribosomal subunit protein uL4.